Reading from the N-terminus, the 143-residue chain is Large-conductance mechanosensitive channel (143 aa).

2 helical membrane-spanning segments follow: residues F10–S30 and G89–V109.

It belongs to the MscL family. In terms of assembly, homopentamer.

It is found in the cell inner membrane. Channel that opens in response to stretch forces in the membrane lipid bilayer. May participate in the regulation of osmotic pressure changes within the cell. This chain is Large-conductance mechanosensitive channel, found in Burkholderia vietnamiensis (strain G4 / LMG 22486) (Burkholderia cepacia (strain R1808)).